The chain runs to 278 residues: Autotransporter adhesin BtaF (278 aa).

An N-terminal signal peptide occupies residues 1–29; sequence MKLPPVFVFELVENQGLANIALIRPRVIA. A surface exposed passenger domain region spans residues 30-182; the sequence is PDNNLRPGGI…RAAIRQNSAA (153 aa). An outer membrane translocation of the passenger domain region spans residues 186–224; it reads LGQRVDGLQGQINSARKEARAGAANAAALSGLRYDNRPG. Residues 225 to 278 form a translocator domain region; it reads KVSIATGVGGFKGSTALAAGIGYTSKNENARYNVSVAYNEAGTSWNAGASFTLN.

The protein belongs to the autotransporter-2 (AT-2) (TC 1.B.40) family. Homotrimer.

The protein localises to the cell surface. It is found in the cell outer membrane. In terms of biological role, participates in bacterial attachment to several surfaces, including various extracellular matrix (ECM) components and a hydrophobic abiotic surface. Involved in adhesion to host epithelial cells and is required for full virulence in mice. Also implicated in the resistance to porcine serum. The sequence is that of Autotransporter adhesin BtaF from Brucella suis biovar 1 (strain 1330).